The primary structure comprises 200 residues: Recombination protein RecR (200 aa).

The segment at 57 to 72 (CRQCRTLTEQELCPQC) adopts a C4-type zinc-finger fold. In terms of domain architecture, Toprim spans 80 to 175 (TQLCVVEGPM…VASRIAHGVP (96 aa)).

The protein belongs to the RecR family.

In terms of biological role, may play a role in DNA repair. It seems to be involved in an RecBC-independent recombinational process of DNA repair. It may act with RecF and RecO. The sequence is that of Recombination protein RecR from Pseudomonas putida (strain W619).